A 396-amino-acid polypeptide reads, in one-letter code: S-adenosylmethionine decarboxylase proenzyme (396 aa).

Catalysis depends on residues E29 and E32. Catalysis depends on S88, which acts as the Schiff-base intermediate with substrate; via pyruvic acid. Residue S88 is modified to Pyruvic acid (Ser); by autocatalysis. The active-site Proton donor; for catalytic activity is the C102. Catalysis depends on proton acceptor; for processing activity residues S287 and H301.

The protein belongs to the eukaryotic AdoMetDC family. It depends on pyruvate as a cofactor. In terms of processing, is synthesized initially as an inactive proenzyme. Formation of the active enzyme involves a self-maturation process in which the active site pyruvoyl group is generated from an internal serine residue via an autocatalytic post-translational modification. Two non-identical subunits are generated from the proenzyme in this reaction, and the pyruvate is formed at the N-terminus of the alpha chain, which is derived from the carboxyl end of the proenzyme. The post-translation cleavage follows an unusual pathway, termed non-hydrolytic serinolysis, in which the side chain hydroxyl group of the serine supplies its oxygen atom to form the C-terminus of the beta chain, while the remainder of the serine residue undergoes an oxidative deamination to produce ammonia and the pyruvoyl group blocking the N-terminus of the alpha chain.

The enzyme catalyses S-adenosyl-L-methionine + H(+) = S-adenosyl 3-(methylsulfanyl)propylamine + CO2. Its pathway is amine and polyamine biosynthesis; S-adenosylmethioninamine biosynthesis; S-adenosylmethioninamine from S-adenosyl-L-methionine: step 1/1. Its function is as follows. Catalyzes the decarboxylation of S-adenosylmethionine, a key step in the biosynthetic pathway for spermidine and spermine. It is essential for normal growth, sporulation, and maintenance of ds-RNA virus. The polypeptide is S-adenosylmethionine decarboxylase proenzyme (SPE2) (Saccharomyces cerevisiae (strain ATCC 204508 / S288c) (Baker's yeast)).